The following is a 261-amino-acid chain: Acyl-[acyl-carrier-protein]--UDP-N-acetylglucosamine O-acyltransferase (261 aa).

It belongs to the transferase hexapeptide repeat family. LpxA subfamily. As to quaternary structure, homotrimer.

It localises to the cytoplasm. The enzyme catalyses a (3R)-hydroxyacyl-[ACP] + UDP-N-acetyl-alpha-D-glucosamine = a UDP-3-O-[(3R)-3-hydroxyacyl]-N-acetyl-alpha-D-glucosamine + holo-[ACP]. The protein operates within glycolipid biosynthesis; lipid IV(A) biosynthesis; lipid IV(A) from (3R)-3-hydroxytetradecanoyl-[acyl-carrier-protein] and UDP-N-acetyl-alpha-D-glucosamine: step 1/6. In terms of biological role, involved in the biosynthesis of lipid A, a phosphorylated glycolipid that anchors the lipopolysaccharide to the outer membrane of the cell. This chain is Acyl-[acyl-carrier-protein]--UDP-N-acetylglucosamine O-acyltransferase, found in Paracoccus denitrificans (strain Pd 1222).